Consider the following 37-residue polypeptide: Large ribosomal subunit protein bL36 (37 aa).

The protein belongs to the bacterial ribosomal protein bL36 family.

The sequence is that of Large ribosomal subunit protein bL36 from Nitratidesulfovibrio vulgaris (strain ATCC 29579 / DSM 644 / CCUG 34227 / NCIMB 8303 / VKM B-1760 / Hildenborough) (Desulfovibrio vulgaris).